The chain runs to 190 residues: Putative manganese efflux pump MntP (190 aa).

Helical transmembrane passes span 3-23 (PISL…AALG), 41-61 (LIFG…GQVA), 69-89 (DHWI…YNGL), 105-125 (FWIL…VGVG), 133-153 (IMVA…IGVM), and 168-188 (IVGG…HLTA).

It belongs to the MntP (TC 9.B.29) family.

It is found in the cell inner membrane. Its function is as follows. Probably functions as a manganese efflux pump. In Pseudomonas syringae pv. tomato (strain ATCC BAA-871 / DC3000), this protein is Putative manganese efflux pump MntP.